A 570-amino-acid chain; its full sequence is Spastin (570 aa).

Over 1 to 35 the chain is Cytoplasmic; that stretch reads MNSGHKARLRGGRACGPVSDGSARGNRLLFYTRSL. The segment at residues 36 to 52 is an intramembrane region (helical); it reads SRVPEWLLRVLLLLLRW. Over 53-570 the chain is Cytoplasmic; sequence LFQPIRRAMA…NREYGDTTGV (518 aa). The region spanning 83–158 is the MIT domain; it reads YHKQAFEFIS…SMAEDRLKLL (76 aa). The tract at residues 186-269 is disordered; it reads APASGAVSKK…SPQRKRDMKN (84 aa). Composition is skewed to polar residues over residues 199 to 208, 216 to 242, and 251 to 261; these read LTITNQTSLR, TPNASGLNCTPSAAQSSRTGPQNNQKG, and VKASTTATASP. 335-342 contacts ATP; that stretch reads GPPGNGKT.

This sequence belongs to the AAA ATPase family. Spastin subfamily. As to quaternary structure, homohexamer. The homohexamer is stabilized by ATP-binding. The homohexamer may adopt a ring conformation through which microtubules pass prior to being severed. Interacts with microtubules.

The protein resides in the membrane. The protein localises to the cytoplasm. Its subcellular location is the cytoskeleton. It is found in the microtubule organizing center. It localises to the centrosome. The protein resides in the perinuclear region. The protein localises to the nucleus. It catalyses the reaction n ATP + n H2O + a microtubule = n ADP + n phosphate + (n+1) alpha/beta tubulin heterodimers.. ATP-dependent microtubule severing protein that specifically recognizes and cuts microtubules that are polyglutamylated. Preferentially recognizes and acts on microtubules decorated with short polyglutamate tails: severing activity increases as the number of glutamates per tubulin rises from one to eight, but decreases beyond this glutamylation threshold. Microtubule severing promotes reorganization of cellular microtubule arrays and the release of microtubules from the centrosome following nucleation. Required for membrane traffic from the endoplasmic reticulum (ER) to the Golgi and for completion of the abscission stage of cytokinesis. Also plays a role in axon growth and the formation of axonal branches. The chain is Spastin from Danio rerio (Zebrafish).